The chain runs to 270 residues: Malonyl-[acyl-carrier protein] O-methyltransferase (270 aa).

It belongs to the methyltransferase superfamily.

The enzyme catalyses malonyl-[ACP] + S-adenosyl-L-methionine = malonyl-[ACP] methyl ester + S-adenosyl-L-homocysteine. The protein operates within cofactor biosynthesis; biotin biosynthesis. Its function is as follows. Converts the free carboxyl group of a malonyl-thioester to its methyl ester by transfer of a methyl group from S-adenosyl-L-methionine (SAM). It allows to synthesize pimeloyl-ACP via the fatty acid synthetic pathway. This chain is Malonyl-[acyl-carrier protein] O-methyltransferase, found in Marinomonas sp. (strain MWYL1).